Here is a 231-residue protein sequence, read N- to C-terminus: Urease subunit gamma/beta (231 aa).

Positions 1–101 (MLLTPTELER…LVTVHQPIRP (101 aa)) are urease gamma. The tract at residues 102–231 (GKLPLAVMPT…RARAQHFKGA (130 aa)) is urease beta.

It in the N-terminal section; belongs to the urease gamma subunit family. This sequence in the C-terminal section; belongs to the urease beta subunit family. Heterohexamer of 3 UreC (alpha) and 3 UreAB (gamma/beta) subunits.

It localises to the cytoplasm. It carries out the reaction urea + 2 H2O + H(+) = hydrogencarbonate + 2 NH4(+). The protein operates within nitrogen metabolism; urea degradation; CO(2) and NH(3) from urea (urease route): step 1/1. The polypeptide is Urease subunit gamma/beta (Pseudomonas syringae pv. tomato (strain ATCC BAA-871 / DC3000)).